Consider the following 598-residue polypeptide: Nuclear receptor subfamily 4 group A member 2 (598 aa).

Residues 1 to 22 are disordered; the sequence is MPCVQAQYGSSPQGASPASQSY. The segment covering 8-22 has biased composition (low complexity); that stretch reads YGSSPQGASPASQSY. A DNA-binding region (nuclear receptor) is located at residues 260 to 335; the sequence is EGLCAVCGDN…VGMVKEVVRT (76 aa). 2 NR C4-type zinc fingers span residues 263 to 283 and 299 to 323; these read CAVCGDNAACQHYGVRTCEGC and CLANKNCPVDKRRRNRCQYCRFQKC. The Bipartite nuclear localization signal (NLS1) motif lies at 287-314; that stretch reads FKRTVQKNAKYVCLANKNCPVDKRRRNR. The segment at 337-361 is disordered; the sequence is SLKGRRGRLPSKPKSPQEPSPPSPP. Residues 338-350 carry the Nuclear localization signal (NLS1) motif; sequence LKGRRGRLPSKPK. Positions 352–361 are enriched in pro residues; sequence PQEPSPPSPP. The region spanning 360–595 is the NR LBD domain; the sequence is PPVSLISALV…AIIDKLFLDT (236 aa). The nuclear export sequence (NES1) motif lies at 443–452; it reads FLELFVLRLA. Residues 568–577 carry the nuclear export sequence (NES2) motif; that stretch reads QGLQRIFYLK.

It belongs to the nuclear hormone receptor family. NR4 subfamily. As to quaternary structure, interacts with SFPQ, NCOR2, SIN3A and HADC1. The interaction with NCOR2 increases in the absence of PITX3. Interacts with PER2. As to expression, expressed in a number of cell lines of T-cell, B-cell and fibroblast origin. Strong expression in brain tissue.

The protein localises to the cytoplasm. The protein resides in the nucleus. Transcriptional regulator which is important for the differentiation and maintenance of meso-diencephalic dopaminergic (mdDA) neurons during development. It is crucial for expression of a set of genes such as SLC6A3, SLC18A2, TH and DRD2 which are essential for development of mdDA neurons. The polypeptide is Nuclear receptor subfamily 4 group A member 2 (NR4A2) (Homo sapiens (Human)).